Consider the following 508-residue polypeptide: Photosystem II CP47 reaction center protein (508 aa).

The next 6 helical transmembrane spans lie at Ser-21–Ser-36, Ile-101–Trp-115, Gly-140–Phe-156, Ile-203–Ser-218, Val-237–Val-252, and Ser-457–Arg-472.

It belongs to the PsbB/PsbC family. PsbB subfamily. PSII is composed of 1 copy each of membrane proteins PsbA, PsbB, PsbC, PsbD, PsbE, PsbF, PsbH, PsbI, PsbJ, PsbK, PsbL, PsbM, PsbT, PsbX, PsbY, PsbZ, Psb30/Ycf12, at least 3 peripheral proteins of the oxygen-evolving complex and a large number of cofactors. It forms dimeric complexes. Requires Binds multiple chlorophylls. PSII binds additional chlorophylls, carotenoids and specific lipids. as cofactor.

The protein resides in the plastid. The protein localises to the chloroplast thylakoid membrane. In terms of biological role, one of the components of the core complex of photosystem II (PSII). It binds chlorophyll and helps catalyze the primary light-induced photochemical processes of PSII. PSII is a light-driven water:plastoquinone oxidoreductase, using light energy to abstract electrons from H(2)O, generating O(2) and a proton gradient subsequently used for ATP formation. The protein is Photosystem II CP47 reaction center protein of Atropa belladonna (Belladonna).